Here is a 98-residue protein sequence, read N- to C-terminus: MASRFMTDPHAMRDMAGRFEVHAQTVEDEARRMWASAQNISGAGWSGMAEATSLDTMTQMNQAFRNIVNMLHGVRDGLVRDANNYEQQEQASQQILSS.

This sequence belongs to the WXG100 family. CFP-10 subfamily.

The protein localises to the secreted. This is ESAT-6-like protein EsxJ from Mycobacterium bovis (strain ATCC BAA-935 / AF2122/97).